The primary structure comprises 275 residues: Pyrroline-5-carboxylate reductase (275 aa).

This sequence belongs to the pyrroline-5-carboxylate reductase family.

It localises to the cytoplasm. The enzyme catalyses L-proline + NADP(+) = (S)-1-pyrroline-5-carboxylate + NADPH + 2 H(+). It catalyses the reaction L-proline + NAD(+) = (S)-1-pyrroline-5-carboxylate + NADH + 2 H(+). It participates in amino-acid biosynthesis; L-proline biosynthesis; L-proline from L-glutamate 5-semialdehyde: step 1/1. Its function is as follows. Catalyzes the reduction of 1-pyrroline-5-carboxylate (PCA) to L-proline. The polypeptide is Pyrroline-5-carboxylate reductase (Pasteurella multocida (strain Pm70)).